A 354-amino-acid polypeptide reads, in one-letter code: Phosphate acyltransferase (354 aa).

The protein belongs to the PlsX family. Homodimer. Probably interacts with PlsY.

It is found in the cytoplasm. It catalyses the reaction a fatty acyl-[ACP] + phosphate = an acyl phosphate + holo-[ACP]. Its pathway is lipid metabolism; phospholipid metabolism. Functionally, catalyzes the reversible formation of acyl-phosphate (acyl-PO(4)) from acyl-[acyl-carrier-protein] (acyl-ACP). This enzyme utilizes acyl-ACP as fatty acyl donor, but not acyl-CoA. The chain is Phosphate acyltransferase from Nitrobacter hamburgensis (strain DSM 10229 / NCIMB 13809 / X14).